The sequence spans 240 residues: Pyridoxine 5'-phosphate synthase (240 aa).

N7 is a 3-amino-2-oxopropyl phosphate binding site. 9-10 (DH) contributes to the 1-deoxy-D-xylulose 5-phosphate binding site. R18 provides a ligand contact to 3-amino-2-oxopropyl phosphate. H43 acts as the Proton acceptor in catalysis. 1-deoxy-D-xylulose 5-phosphate-binding residues include R45 and H50. E70 (proton acceptor) is an active-site residue. T100 is a binding site for 1-deoxy-D-xylulose 5-phosphate. H191 serves as the catalytic Proton donor. Residues G192 and 213 to 214 (GH) contribute to the 3-amino-2-oxopropyl phosphate site.

The protein belongs to the PNP synthase family. As to quaternary structure, homooctamer; tetramer of dimers.

It localises to the cytoplasm. It catalyses the reaction 3-amino-2-oxopropyl phosphate + 1-deoxy-D-xylulose 5-phosphate = pyridoxine 5'-phosphate + phosphate + 2 H2O + H(+). Its pathway is cofactor biosynthesis; pyridoxine 5'-phosphate biosynthesis; pyridoxine 5'-phosphate from D-erythrose 4-phosphate: step 5/5. Functionally, catalyzes the complicated ring closure reaction between the two acyclic compounds 1-deoxy-D-xylulose-5-phosphate (DXP) and 3-amino-2-oxopropyl phosphate (1-amino-acetone-3-phosphate or AAP) to form pyridoxine 5'-phosphate (PNP) and inorganic phosphate. The chain is Pyridoxine 5'-phosphate synthase from Trichodesmium erythraeum (strain IMS101).